Here is a 172-residue protein sequence, read N- to C-terminus: Shikimate kinase (172 aa).

Residue 14-19 coordinates ATP; that stretch reads GAGKST. S18 is a Mg(2+) binding site. Substrate-binding residues include D36, R60, and G82. An ATP-binding site is contributed by R120. Residue R139 participates in substrate binding. Q156 contributes to the ATP binding site.

The protein belongs to the shikimate kinase family. As to quaternary structure, monomer. Mg(2+) is required as a cofactor.

It is found in the cytoplasm. It carries out the reaction shikimate + ATP = 3-phosphoshikimate + ADP + H(+). It functions in the pathway metabolic intermediate biosynthesis; chorismate biosynthesis; chorismate from D-erythrose 4-phosphate and phosphoenolpyruvate: step 5/7. Functionally, catalyzes the specific phosphorylation of the 3-hydroxyl group of shikimic acid using ATP as a cosubstrate. This chain is Shikimate kinase, found in Vibrio vulnificus (strain CMCP6).